Consider the following 161-residue polypeptide: Protein-export protein SecB (161 aa).

The protein belongs to the SecB family. In terms of assembly, homotetramer, a dimer of dimers. One homotetramer interacts with 1 SecA dimer.

The protein localises to the cytoplasm. One of the proteins required for the normal export of preproteins out of the cell cytoplasm. It is a molecular chaperone that binds to a subset of precursor proteins, maintaining them in a translocation-competent state. It also specifically binds to its receptor SecA. The polypeptide is Protein-export protein SecB (Bradyrhizobium diazoefficiens (strain JCM 10833 / BCRC 13528 / IAM 13628 / NBRC 14792 / USDA 110)).